Reading from the N-terminus, the 321-residue chain is Cytoskeleton protein RodZ (321 aa).

At 1–111 (MNTEATHDQN…LGKRRKKRDG (111 aa)) the chain is on the cytoplasmic side. In terms of domain architecture, HTH cro/C1-type spans 19 to 71 (LRNAREQLGLSQQAVAERLCLKVSTVRDIEEDKAPSDLASTFLRGYIRSYARL). A DNA-binding region (H-T-H motif) is located at residues 30-49 (QQAVAERLCLKVSTVRDIEE). A helical; Signal-anchor for type II membrane protein transmembrane segment spans residues 112–132 (WLMSFTWLVLFVVVGLTGAWW). Residues 133 to 321 (WQNHKAQQEE…TINAEPTSAQ (189 aa)) lie on the Periplasmic side of the membrane. The segment at 167 to 190 (DTRAAASQDTTPAETAPAAPVDST) is disordered. The span at 176 to 190 (TTPAETAPAAPVDST) shows a compositional bias: low complexity.

Belongs to the RodZ family.

The protein localises to the cell inner membrane. In terms of biological role, cytoskeletal protein that is involved in cell-shape control through regulation of the length of the long axis. This chain is Cytoskeleton protein RodZ, found in Salmonella arizonae (strain ATCC BAA-731 / CDC346-86 / RSK2980).